Reading from the N-terminus, the 138-residue chain is Gas vesicle protein A (138 aa).

The disordered stretch occupies residues 74-138; it reads EAGPRKDPGL…STSRKKEEQE (65 aa). Residues 116 to 129 show a composition bias toward low complexity; the sequence is GSSSGSSSGSSSRS.

This sequence belongs to the gas vesicle GvpA family. The gas vesicle shell is 2 nm thick and consists of a single layer of this protein. It forms helical ribs nearly perpendicular to the long axis of the vesicle.

Its subcellular location is the gas vesicle shell. In terms of biological role, gas vesicles are hollow, gas filled proteinaceous nanostructures found in some microorganisms. During planktonic growth they allow positioning of the organism at a favorable depth for light or nutrient acquisition. GvpA forms the protein shell. It is not clear what function gas vesicles perform in soil bacteria. The protein is Gas vesicle protein A of Streptomyces sp. (strain CB03234).